Here is an 80-residue protein sequence, read N- to C-terminus: Exodeoxyribonuclease 7 small subunit (80 aa).

Belongs to the XseB family. Heterooligomer composed of large and small subunits.

The protein localises to the cytoplasm. It carries out the reaction Exonucleolytic cleavage in either 5'- to 3'- or 3'- to 5'-direction to yield nucleoside 5'-phosphates.. Bidirectionally degrades single-stranded DNA into large acid-insoluble oligonucleotides, which are then degraded further into small acid-soluble oligonucleotides. The protein is Exodeoxyribonuclease 7 small subunit of Rickettsia bellii (strain OSU 85-389).